The following is a 600-amino-acid chain: DDB1- and CUL4-associated factor 15 (600 aa).

The tract at residues 1 to 29 (MAPSSKSERNSGAGSAGGGPGGTGGKRAV) is disordered. The segment covering 14-27 (GSAGGGPGGTGGKR) has biased composition (gly residues). Ser-50 is subject to Phosphoserine. Cys-193, Cys-196, Cys-211, and His-214 together coordinate Zn(2+). Ser-314 is modified (phosphoserine). Residues 334–343 (AKGSPLEETR) are compositionally biased toward basic and acidic residues. The tract at residues 334-384 (AKGSPLEETRLPSSLGPSSSRCRPSLEPQAPSGEVVPRDSPPAAETTAPEP) is disordered. 2 stretches are compositionally biased toward low complexity: residues 344–359 (LPSS…RPSL) and 374–384 (PPAAETTAPEP).

In terms of assembly, component of the DCX(DCAF15) complex, also named CLR4(DCAF15) complex, composed of DCAF15, DDB1, cullin-4 (CUL4A or CUL4B), DDA1 and RBX1.

It participates in protein modification; protein ubiquitination. Its function is as follows. Substrate-recognition component of the DCX(DCAF15) complex, a cullin-4-RING E3 ubiquitin-protein ligase complex that mediates ubiquitination and degradation of target proteins. The DCX(DCAF15) complex acts as a regulator of the natural killer (NK) cells effector functions, possibly by mediating ubiquitination and degradation of cohesin subunits SMC1A and SMC3. May play a role in the activation of antigen-presenting cells (APC) and their interaction with NK cells. The sequence is that of DDB1- and CUL4-associated factor 15 from Mus musculus (Mouse).